The primary structure comprises 120 residues: Histone H3-like centromeric protein cnp1 (120 aa).

Residues 1–26 (MAKKSLMAEPGDPIPRPRKKRYRPGT) form a disordered region. Residues 14 to 120 (IPRPRKKRYR…MQLARRIRGA (107 aa)) form an H3-like region.

It belongs to the histone H3 family. In terms of assembly, component of centromeric nucleosomes, where DNA is wrapped around a histone octamer core. The octamer contains two molecules each of H2A, H2B, cnp1/CENPA and H4 assembled in one cnp1-H4 heterotetramer and two H2A-H2B heterodimers. Interacts with the inner kinetochore. Component of centromeric nucleosomes. Interacts with mis6. Interacts with sim4. Post-translationally, ubiquitinated. Is degraded through ubiquitin-mediated proteolysis when not protected by its association to the kinetochore.

The protein resides in the nucleus. The protein localises to the chromosome. Its subcellular location is the centromere. Histone H3-like nucleosomal protein that is specifically found in centromeric nucleosomes. Replaces conventional H3 in the nucleosome core of centromeric chromatin that serves as an assembly site for the inner kinetochore. Required for recruitment and assembly of kinetochore proteins, mitotic progression and chromosome segregation. May serve as an epigenetic mark that propagates centromere identity through replication and cell division. In Schizosaccharomyces pombe (strain 972 / ATCC 24843) (Fission yeast), this protein is Histone H3-like centromeric protein cnp1 (cnp1).